The chain runs to 230 residues: MKIGIIGAMEPEVAHLIASMTDTQTQTIAGIEFVAGQLEGKEVIVTRSGIGKVTASVATTLLIEKYAPDYVINTGSAGGFVDSLAIGDIVISSEVRHHDVDVTAFGYEIGQMAQQPAAFMPDRTLVEAAKKAVADLGEVKAIEGLICTGDSFICDPERTKVMLNNFPTMAACEMEGAAIAQVCHQFKVPFVVIRSLSDNANNDSPVDFDSYLVKAGHHSALMVISLLKHL.

Glu-12 acts as the Proton acceptor in catalysis. Substrate contacts are provided by residues Gly-78, Ile-153, and 174-175 (ME). Asp-198 (proton donor) is an active-site residue.

This sequence belongs to the PNP/UDP phosphorylase family. MtnN subfamily.

It carries out the reaction S-adenosyl-L-homocysteine + H2O = S-(5-deoxy-D-ribos-5-yl)-L-homocysteine + adenine. It catalyses the reaction S-methyl-5'-thioadenosine + H2O = 5-(methylsulfanyl)-D-ribose + adenine. The enzyme catalyses 5'-deoxyadenosine + H2O = 5-deoxy-D-ribose + adenine. The protein operates within amino-acid biosynthesis; L-methionine biosynthesis via salvage pathway; S-methyl-5-thio-alpha-D-ribose 1-phosphate from S-methyl-5'-thioadenosine (hydrolase route): step 1/2. Functionally, catalyzes the irreversible cleavage of the glycosidic bond in both 5'-methylthioadenosine (MTA) and S-adenosylhomocysteine (SAH/AdoHcy) to adenine and the corresponding thioribose, 5'-methylthioribose and S-ribosylhomocysteine, respectively. Also cleaves 5'-deoxyadenosine, a toxic by-product of radical S-adenosylmethionine (SAM) enzymes, into 5-deoxyribose and adenine. In Shewanella loihica (strain ATCC BAA-1088 / PV-4), this protein is 5'-methylthioadenosine/S-adenosylhomocysteine nucleosidase.